Here is a 156-residue protein sequence, read N- to C-terminus: Small ribosomal subunit protein uS7 (156 aa).

Belongs to the universal ribosomal protein uS7 family. In terms of assembly, part of the 30S ribosomal subunit. Contacts proteins S9 and S11.

Its function is as follows. One of the primary rRNA binding proteins, it binds directly to 16S rRNA where it nucleates assembly of the head domain of the 30S subunit. Is located at the subunit interface close to the decoding center, probably blocks exit of the E-site tRNA. The protein is Small ribosomal subunit protein uS7 of Rippkaea orientalis (strain PCC 8801 / RF-1) (Cyanothece sp. (strain PCC 8801)).